Here is a 388-residue protein sequence, read N- to C-terminus: Leucine aminopeptidase 1 (388 aa).

Positions 1-19 (MKSLSLLALAAIAPPAAVA) are cleaved as a signal peptide. Positions 20 to 88 (AVVDHQVPFE…SVKSHERIQV (69 aa)) are excised as a propeptide. N-linked (GlcNAc...) asparagine glycosylation occurs at N180. Positions 188, 207, 246, and 273 each coordinate Zn(2+). An intrachain disulfide couples C322 to C326. H355 serves as a coordination point for Zn(2+).

This sequence belongs to the peptidase M28 family. M28E subfamily. Monomer. The cofactor is Zn(2+).

The protein resides in the secreted. In terms of biological role, extracellular aminopeptidase that allows assimilation of proteinaceous substrates. This chain is Leucine aminopeptidase 1 (LAP1), found in Coccidioides posadasii (strain RMSCC 757 / Silveira) (Valley fever fungus).